A 563-amino-acid chain; its full sequence is Choline transporter (563 aa).

The segment at Met-1 to Lys-25 is disordered. Topologically, residues Met-1 to Ser-57 are extracellular. N-linked (GlcNAc...) asparagine glycosylation is found at Asn-7 and Asn-20. A phosphoserine mark is found at Ser-22 and Ser-42. The chain crosses the membrane as a helical span at residues Phe-58–Ser-78. The Cytoplasmic portion of the chain corresponds to Thr-79 to Ser-87. Residues Gly-88 to Gly-108 traverse the membrane as a helical segment. Topologically, residues Thr-109 to Arg-182 are extracellular. Residues Trp-183–Gly-203 form a helical membrane-spanning segment. The Cytoplasmic portion of the chain corresponds to Lys-204–Ser-205. The helical transmembrane segment at Leu-206 to Ile-226 threads the bilayer. Residues Thr-227–Gly-255 are Extracellular-facing. Asn-248 carries N-linked (GlcNAc...) asparagine glycosylation. Residues Gly-256–Ala-276 form a helical membrane-spanning segment. The Cytoplasmic segment spans residues Thr-277–Ala-293. Residues Ile-294 to Phe-314 form a helical membrane-spanning segment. Topologically, residues Ser-315–Lys-342 are extracellular. N-linked (GlcNAc...) asparagine glycosylation occurs at Asn-341. Residues Ser-343 to Cys-363 form a helical membrane-spanning segment. The Cytoplasmic portion of the chain corresponds to His-364–Asn-398. The chain crosses the membrane as a helical span at residues Ala-399–Ser-417. Residues Ser-418 to Thr-426 lie on the Extracellular side of the membrane. A helical membrane pass occupies residues Gly-427 to Ala-445. Over Lys-446–Asn-465 the chain is Cytoplasmic. A helical membrane pass occupies residues Ile-466–Pro-486. At Val-487 to Asn-491 the chain is on the extracellular side. A helical membrane pass occupies residues Met-492 to Tyr-512. Residues Lys-513–Lys-563 lie on the Cytoplasmic side of the membrane.

Belongs to the amino acid-polyamine-organocation (APC) superfamily. Amino acid/choline transporter (ACT) (TC 2.A.3.4) family.

It localises to the membrane. It catalyses the reaction choline(out) = choline(in). The enzyme catalyses ethanolamine(in) = ethanolamine(out). In terms of biological role, sole choline transporter in yeast. Also transports ethanolamine. The protein is Choline transporter (HNM1) of Saccharomyces cerevisiae (strain ATCC 204508 / S288c) (Baker's yeast).